The chain runs to 160 residues: SsrA-binding protein (160 aa).

The segment at 131 to 160 (KKEFDKRHTEKERDSDREIQRAMRTKGKDD) is disordered.

This sequence belongs to the SmpB family.

The protein localises to the cytoplasm. Required for rescue of stalled ribosomes mediated by trans-translation. Binds to transfer-messenger RNA (tmRNA), required for stable association of tmRNA with ribosomes. tmRNA and SmpB together mimic tRNA shape, replacing the anticodon stem-loop with SmpB. tmRNA is encoded by the ssrA gene; the 2 termini fold to resemble tRNA(Ala) and it encodes a 'tag peptide', a short internal open reading frame. During trans-translation Ala-aminoacylated tmRNA acts like a tRNA, entering the A-site of stalled ribosomes, displacing the stalled mRNA. The ribosome then switches to translate the ORF on the tmRNA; the nascent peptide is terminated with the 'tag peptide' encoded by the tmRNA and targeted for degradation. The ribosome is freed to recommence translation, which seems to be the essential function of trans-translation. In Stutzerimonas stutzeri (strain A1501) (Pseudomonas stutzeri), this protein is SsrA-binding protein.